The primary structure comprises 467 residues: Serine decarboxylase 2 (467 aa).

H178 contacts substrate. N6-(pyridoxal phosphate)lysine is present on K290.

This sequence belongs to the group II decarboxylase family. The cofactor is pyridoxal 5'-phosphate.

The catalysed reaction is L-serine + H(+) = ethanolamine + CO2. Its function is as follows. Catalyzes the biosynthesis of ethanolamine from serine. Decarboxylation of free serine is the major source of ethanolamine production in plants and ethanolamine metabolism is crucial for the synthesis of choline, phosphatidylethanolamine (PE) and phosphatidylcholine (PC), and thus for plant growth. This Oryza sativa subsp. japonica (Rice) protein is Serine decarboxylase 2.